The following is a 219-amino-acid chain: Flagellar transcriptional regulator FlhC (219 aa).

Residues Cys137, Cys140, Cys157, and Cys160 each coordinate Zn(2+).

It belongs to the FlhC family. As to quaternary structure, heterohexamer composed of two FlhC and four FlhD subunits. Each FlhC binds a FlhD dimer, forming a heterotrimer, and a hexamer assembles by dimerization of two heterotrimers. Zn(2+) serves as cofactor.

The protein resides in the cytoplasm. Functionally, functions in complex with FlhD as a master transcriptional regulator that regulates transcription of several flagellar and non-flagellar operons by binding to their promoter region. Activates expression of class 2 flagellar genes, including fliA, which is a flagellum-specific sigma factor that turns on the class 3 genes. Also regulates genes whose products function in a variety of physiological pathways. This Paraburkholderia phymatum (strain DSM 17167 / CIP 108236 / LMG 21445 / STM815) (Burkholderia phymatum) protein is Flagellar transcriptional regulator FlhC.